The following is a 313-amino-acid chain: Acetyl-coenzyme A carboxylase carboxyl transferase subunit alpha (313 aa).

The CoA carboxyltransferase C-terminal domain occupies 42–292 (KSDKLLRDTY…GAAIGEELDK (251 aa)).

Belongs to the AccA family. In terms of assembly, acetyl-CoA carboxylase is a heterohexamer composed of biotin carboxyl carrier protein (AccB), biotin carboxylase (AccC) and two subunits each of ACCase subunit alpha (AccA) and ACCase subunit beta (AccD).

The protein localises to the cytoplasm. The enzyme catalyses N(6)-carboxybiotinyl-L-lysyl-[protein] + acetyl-CoA = N(6)-biotinyl-L-lysyl-[protein] + malonyl-CoA. Its pathway is lipid metabolism; malonyl-CoA biosynthesis; malonyl-CoA from acetyl-CoA: step 1/1. Functionally, component of the acetyl coenzyme A carboxylase (ACC) complex. First, biotin carboxylase catalyzes the carboxylation of biotin on its carrier protein (BCCP) and then the CO(2) group is transferred by the carboxyltransferase to acetyl-CoA to form malonyl-CoA. The protein is Acetyl-coenzyme A carboxylase carboxyl transferase subunit alpha of Rhizorhabdus wittichii (strain DSM 6014 / CCUG 31198 / JCM 15750 / NBRC 105917 / EY 4224 / RW1) (Sphingomonas wittichii).